Consider the following 408-residue polypeptide: MLDIYLGVGMFIAIVLALVLIIMFAKSKLVPEGEVTISINGDPDKAITAQPGDKLLGALANSGIFVSSACGGGGSCGQCRVDIKAGGGEILPTELDHISKREAKEGCRLSCQVSIKQDMDIELPEEIFGIKKWDCEVISNDNKATFIKELKLKIPNGESVPFRAGGYIQIEAPPHHVKYKDFDVPEEYRGDWERFGFFDIESKVDDETIRAYSMANYPEEEGIIMLNVRVASPPPNNLSLPAGKMSSYIWSLKEGDKATISGPFGEFFAKKTDAEMVFIGGGAGMAPMRSHIFDQLRRLKTDRKISFWYGARSLREMFYVEDFDMLQKENDNFKWHVALSDPQPEDNWEGMTGFIHQVLLENYLKDHPAPEDCEFYMCGPPMMNAAVISMLKDLGVEDENIMLDDFGG.

A helical membrane pass occupies residues 4-24 (IYLGVGMFIAIVLALVLIIMF). In terms of domain architecture, 2Fe-2S ferredoxin-type spans 33 to 127 (GEVTISINGD…DMDIELPEEI (95 aa)). [2Fe-2S] cluster is bound by residues cysteine 70, cysteine 76, cysteine 79, and cysteine 111. Residues 130–270 (IKKWDCEVIS…SGPFGEFFAK (141 aa)) enclose the FAD-binding FR-type domain.

Belongs to the NqrF family. Composed of six subunits; NqrA, NqrB, NqrC, NqrD, NqrE and NqrF. [2Fe-2S] cluster is required as a cofactor. FAD serves as cofactor.

The protein resides in the cell inner membrane. The catalysed reaction is a ubiquinone + n Na(+)(in) + NADH + H(+) = a ubiquinol + n Na(+)(out) + NAD(+). Its function is as follows. NQR complex catalyzes the reduction of ubiquinone-1 to ubiquinol by two successive reactions, coupled with the transport of Na(+) ions from the cytoplasm to the periplasm. The first step is catalyzed by NqrF, which accepts electrons from NADH and reduces ubiquinone-1 to ubisemiquinone by a one-electron transfer pathway. The protein is Na(+)-translocating NADH-quinone reductase subunit F of Pseudoalteromonas atlantica (strain T6c / ATCC BAA-1087).